Reading from the N-terminus, the 445-residue chain is MEVTQTKAEGLSRTFAVKVPVSELQAKLDARIEEIRPQMRLKGFRPGKVPAAHVRKMYGRDLMGEVIDKLVNETNQKALEENSLRPAGTPNVDMQADIEKVVTGKEDLSYQMHVDVMPEFTPVDVSTLTIVRPVAEIADEQIDEALKRIADQNMKYEPRAEGEASQDGDAVIVDFVGKIDGEAFEGGTAEQQSVVLGANRFIPGFEEQLLGVKAGEEKELNVSFPEDYPAANLAGKAAVFETKIHEVRAPQTPEMDDEFAKGLGLESLEQLRGLVKDQLANEHTTASRSKAKRDLLDKLDAAHDFDLPPGMVDQEFEQIWQQLQREMDAGRVSDEEKAKPEETLRDEYRKIAERRVRLGLVLAEVGRIADVRISEAEVNQALIREARQYPGQEREVVQFFQKNPNAMAQLRAPIYEDKVVDHILETAKVEEKTVTREELFAEDEE.

Residues 168-253 (GDAVIVDFVG…IHEVRAPQTP (86 aa)) form the PPIase FKBP-type domain.

Belongs to the FKBP-type PPIase family. Tig subfamily.

The protein localises to the cytoplasm. It catalyses the reaction [protein]-peptidylproline (omega=180) = [protein]-peptidylproline (omega=0). Its function is as follows. Involved in protein export. Acts as a chaperone by maintaining the newly synthesized protein in an open conformation. Functions as a peptidyl-prolyl cis-trans isomerase. The protein is Trigger factor of Hyphomonas neptunium (strain ATCC 15444).